The sequence spans 219 residues: Thymidylate kinase (219 aa).

An ATP-binding site is contributed by G9–T16.

Belongs to the thymidylate kinase family.

It catalyses the reaction dTMP + ATP = dTDP + ADP. Phosphorylation of dTMP to form dTDP in both de novo and salvage pathways of dTTP synthesis. The protein is Thymidylate kinase of Syntrophus aciditrophicus (strain SB).